The following is a 366-amino-acid chain: tRNA(Met) cytidine acetate ligase (366 aa).

ATP contacts are provided by residues 7 to 20 (IAEFNPFHYGHQYL), Gly-96, Asn-152, and Arg-175.

Belongs to the TmcAL family.

The protein localises to the cytoplasm. The catalysed reaction is cytidine(34) in elongator tRNA(Met) + acetate + ATP = N(4)-acetylcytidine(34) in elongator tRNA(Met) + AMP + diphosphate. Its function is as follows. Catalyzes the formation of N(4)-acetylcytidine (ac(4)C) at the wobble position of elongator tRNA(Met), using acetate and ATP as substrates. First activates an acetate ion to form acetyladenylate (Ac-AMP) and then transfers the acetyl group to tRNA to form ac(4)C34. This chain is tRNA(Met) cytidine acetate ligase, found in Streptococcus equi subsp. zooepidemicus (strain MGCS10565).